Consider the following 368-residue polypeptide: Phosphoserine aminotransferase (368 aa).

Arg-44 serves as a coordination point for L-glutamate. Pyridoxal 5'-phosphate-binding positions include 78–79, Trp-104, Thr-157, Asp-179, and Gln-202; that span reads AT. Lys-203 bears the N6-(pyridoxal phosphate)lysine mark. 244–245 is a pyridoxal 5'-phosphate binding site; it reads NT.

It belongs to the class-V pyridoxal-phosphate-dependent aminotransferase family. SerC subfamily. Homodimer. It depends on pyridoxal 5'-phosphate as a cofactor.

It localises to the cytoplasm. The enzyme catalyses O-phospho-L-serine + 2-oxoglutarate = 3-phosphooxypyruvate + L-glutamate. It catalyses the reaction 4-(phosphooxy)-L-threonine + 2-oxoglutarate = (R)-3-hydroxy-2-oxo-4-phosphooxybutanoate + L-glutamate. It participates in amino-acid biosynthesis; L-serine biosynthesis; L-serine from 3-phospho-D-glycerate: step 2/3. It functions in the pathway cofactor biosynthesis; pyridoxine 5'-phosphate biosynthesis; pyridoxine 5'-phosphate from D-erythrose 4-phosphate: step 3/5. Functionally, catalyzes the reversible conversion of 3-phosphohydroxypyruvate to phosphoserine and of 3-hydroxy-2-oxo-4-phosphonooxybutanoate to phosphohydroxythreonine. The sequence is that of Phosphoserine aminotransferase from Neisseria meningitidis serogroup B (strain ATCC BAA-335 / MC58).